Consider the following 79-residue polypeptide: DNA-directed RNA polymerase subunit omega (79 aa).

It belongs to the RNA polymerase subunit omega family. As to quaternary structure, the RNAP catalytic core consists of 2 alpha, 1 beta, 1 beta' and 1 omega subunit. When a sigma factor is associated with the core the holoenzyme is formed, which can initiate transcription.

It carries out the reaction RNA(n) + a ribonucleoside 5'-triphosphate = RNA(n+1) + diphosphate. Promotes RNA polymerase assembly. Latches the N- and C-terminal regions of the beta' subunit thereby facilitating its interaction with the beta and alpha subunits. This Kosmotoga olearia (strain ATCC BAA-1733 / DSM 21960 / TBF 19.5.1) protein is DNA-directed RNA polymerase subunit omega.